Reading from the N-terminus, the 1378-residue chain is DNA-directed RNA polymerase subunit beta (1378 aa).

Belongs to the RNA polymerase beta chain family. The RNAP catalytic core consists of 2 alpha, 1 beta, 1 beta' and 1 omega subunit. When a sigma factor is associated with the core the holoenzyme is formed, which can initiate transcription.

It catalyses the reaction RNA(n) + a ribonucleoside 5'-triphosphate = RNA(n+1) + diphosphate. Functionally, DNA-dependent RNA polymerase catalyzes the transcription of DNA into RNA using the four ribonucleoside triphosphates as substrates. This Agrobacterium fabrum (strain C58 / ATCC 33970) (Agrobacterium tumefaciens (strain C58)) protein is DNA-directed RNA polymerase subunit beta.